Consider the following 141-residue polypeptide: uncharacterized protein (141 aa).

Residues methionine 1–serine 17 show a composition bias toward basic and acidic residues. Positions methionine 1–aspartate 24 are disordered. Residues isoleucine 52 to methionine 115 adopt a coiled-coil conformation.

This is an uncharacterized protein from Acanthamoeba polyphaga (Amoeba).